Here is a 265-residue protein sequence, read N- to C-terminus: MTESREPHVAGSAAPRPEPANGLASGQPSSRARYSRVLLKLGGEMFGGGQVGLDPDVVAQVARQIAEVVRGGVQVAVVIGGGNFFRGAQLQQRGMERTRSDYMGMLGTVMNSLALQDFLEKEGIVTRVQTAITMGQVAEPYLPLRAVRHLEKGRVVIFGAGMGLPYFSTDTTAAQRALEIGAEVVLMAKAVDGVFSADPRQYPEAELITAISHREVIDRGLRVADATAFSLCMDNGMPILVFNLLTNGNIARAVGGEKIGTLVTT.

Positions 1–29 are disordered; sequence MTESREPHVAGSAAPRPEPANGLASGQPS. 40–43 is an ATP binding site; that stretch reads KLGG. Gly-81 serves as a coordination point for UMP. 2 residues coordinate ATP: Gly-82 and Arg-86. Residues Asp-101 and 162-169 contribute to the UMP site; that span reads MGLPYFST. ATP contacts are provided by Phe-195 and Asp-198.

This sequence belongs to the UMP kinase family. Homohexamer.

The protein localises to the cytoplasm. It catalyses the reaction UMP + ATP = UDP + ADP. It participates in pyrimidine metabolism; CTP biosynthesis via de novo pathway; UDP from UMP (UMPK route): step 1/1. With respect to regulation, inhibited by UTP. In terms of biological role, catalyzes the reversible phosphorylation of UMP to UDP. This is Uridylate kinase from Mycolicibacterium paratuberculosis (strain ATCC BAA-968 / K-10) (Mycobacterium paratuberculosis).